The following is a 94-amino-acid chain: Endoribonuclease VapD 2 (94 aa).

Belongs to the VapD ribonuclease family. Homodimer.

In terms of biological role, cleaves ssRNA, mostly between U:A. The sequence is that of Endoribonuclease VapD 2 from Riemerella anatipestifer (Moraxella anatipestifer).